We begin with the raw amino-acid sequence, 376 residues long: Probable transcription factor At1g61730 (376 aa).

The tract at residues 1–150 (MTKKLNPLED…RVKKDEESVK (150 aa)) is disordered. The segment covering 17–40 (SDEDDVETSEAGEASDDSSSSEED) has biased composition (acidic residues). A Phosphoserine modification is found at Ser-49. Residues 49–72 (SPSATTAAAPPAKSTAVSTAADSD) are compositionally biased toward low complexity. Acidic residues predominate over residues 73–83 (SGSETETDSDS). The segment covering 87–103 (NPPNSGSGKTIALNTVN) has biased composition (polar residues).

The protein belongs to the GeBP family. As to quaternary structure, interacts with DEK3.

The sequence is that of Probable transcription factor At1g61730 from Arabidopsis thaliana (Mouse-ear cress).